The following is a 329-amino-acid chain: Protein PRY2 (329 aa).

An N-terminal signal peptide occupies residues 1 to 18 (MKFSKVSLLAASASVALS). Positions 122–131 (TSASATQDDV) are enriched in polar residues. The disordered stretch occupies residues 122–197 (TSASATQDDV…SSSDFSTSMV (76 aa)). Over residues 132 to 190 (TTTLTSSTQPTSTTTPTTTTTSPTTTTSPTTTASPTTTASPTTATTTQSTASSTQSSSS) the composition is skewed to low complexity. Residues 197-311 (VNEHNTKRAL…EWGDYIICSY (115 aa)) enclose the SCP domain.

This sequence belongs to the CRISP family. Post-translationally, O-glycosylated.

It is found in the secreted. Functionally, secreted protein required for efficient export of lipids such as acetylated sterols. Acts in detoxification of hydrophobic compounds. This Saccharomyces cerevisiae (strain ATCC 204508 / S288c) (Baker's yeast) protein is Protein PRY2 (PRY2).